Consider the following 84-residue polypeptide: Cell division topological specificity factor (84 aa).

Belongs to the MinE family.

Prevents the cell division inhibition by proteins MinC and MinD at internal division sites while permitting inhibition at polar sites. This ensures cell division at the proper site by restricting the formation of a division septum at the midpoint of the long axis of the cell. This is Cell division topological specificity factor from Cupriavidus pinatubonensis (strain JMP 134 / LMG 1197) (Cupriavidus necator (strain JMP 134)).